The chain runs to 431 residues: Adenylosuccinate synthetase (431 aa).

Residues 12–18 (GDEGKGK) and 40–42 (GHT) each bind GTP. The active-site Proton acceptor is D13. The Mg(2+) site is built by D13 and G40. IMP contacts are provided by residues 13–16 (DEGK), 38–41 (NAGH), T131, R145, Q225, T240, and R304. The active-site Proton donor is H41. Residue 300–306 (TTTGRKR) participates in substrate binding. GTP is bound by residues R306, 332–334 (KLD), and 414–416 (STS).

It belongs to the adenylosuccinate synthetase family. As to quaternary structure, homodimer. Requires Mg(2+) as cofactor.

It is found in the cytoplasm. The catalysed reaction is IMP + L-aspartate + GTP = N(6)-(1,2-dicarboxyethyl)-AMP + GDP + phosphate + 2 H(+). It functions in the pathway purine metabolism; AMP biosynthesis via de novo pathway; AMP from IMP: step 1/2. Its function is as follows. Plays an important role in the de novo pathway of purine nucleotide biosynthesis. Catalyzes the first committed step in the biosynthesis of AMP from IMP. This Dinoroseobacter shibae (strain DSM 16493 / NCIMB 14021 / DFL 12) protein is Adenylosuccinate synthetase.